We begin with the raw amino-acid sequence, 109 residues long: Large ribosomal subunit protein uL22 (109 aa).

Belongs to the universal ribosomal protein uL22 family. As to quaternary structure, part of the 50S ribosomal subunit.

This protein binds specifically to 23S rRNA; its binding is stimulated by other ribosomal proteins, e.g. L4, L17, and L20. It is important during the early stages of 50S assembly. It makes multiple contacts with different domains of the 23S rRNA in the assembled 50S subunit and ribosome. Its function is as follows. The globular domain of the protein is located near the polypeptide exit tunnel on the outside of the subunit, while an extended beta-hairpin is found that lines the wall of the exit tunnel in the center of the 70S ribosome. The polypeptide is Large ribosomal subunit protein uL22 (Paraburkholderia phymatum (strain DSM 17167 / CIP 108236 / LMG 21445 / STM815) (Burkholderia phymatum)).